A 269-amino-acid chain; its full sequence is GATA zinc finger domain-containing protein 1 (269 aa).

The GATA-type zinc finger occupies 9–33 (CSVCKTTSSSMWKKGAQGEILCHHC). Residues 63-115 (ATFASTSATPPQSNGGGGGKQSKQEIHRRSARLRNTKYKSAPAAEKKVSTKGK) form a disordered region. A Glycyl lysine isopeptide (Lys-Gly) (interchain with G-Cter in SUMO2) cross-link involves residue Lys262.

Component of a chromatin complex, at least composed of KDM5A, GATAD1 and EMSY. As to expression, ubiquitously expressed among various tissue types. Expressed in left ventricular myocytes.

It localises to the nucleus. Functionally, component of some chromatin complex recruited to chromatin sites methylated 'Lys-4' of histone H3 (H3K4me), with a preference for trimethylated form (H3K4me3). The polypeptide is GATA zinc finger domain-containing protein 1 (GATAD1) (Homo sapiens (Human)).